Reading from the N-terminus, the 144-residue chain is 3-dehydroquinate dehydratase (144 aa).

The Proton acceptor role is filled by Tyr-22. Substrate contacts are provided by Asn-71, His-77, and Asp-84. The active-site Proton donor is the His-97. Substrate-binding positions include 98-99 (IS) and Arg-108.

The protein belongs to the type-II 3-dehydroquinase family. Homododecamer.

The catalysed reaction is 3-dehydroquinate = 3-dehydroshikimate + H2O. Its pathway is metabolic intermediate biosynthesis; chorismate biosynthesis; chorismate from D-erythrose 4-phosphate and phosphoenolpyruvate: step 3/7. Functionally, catalyzes a trans-dehydration via an enolate intermediate. This Thermotoga maritima (strain ATCC 43589 / DSM 3109 / JCM 10099 / NBRC 100826 / MSB8) protein is 3-dehydroquinate dehydratase (aroQ).